The primary structure comprises 470 residues: E3 SUMO-protein ligase EGR2 (470 aa).

The span at 126 to 141 (PPASTTASSSVTSASP) shows a compositional bias: low complexity. Disordered stretches follow at residues 126–153 (PPAS…GVCT), 159–178 (PELD…SGCT), and 184–211 (DPSA…YPSP). Lys247 carries the post-translational modification N6-acetyllysine; by EP300. The segment at 275 to 344 (GPSAGVTGPG…RPYPCPAEGC (70 aa)) is disordered. Positions 281–291 (TGPGASGGGEG) are enriched in gly residues. 3 C2H2-type zinc fingers span residues 337 to 361 (YPCP…IRIH), 367 to 389 (FQCR…IRTH), and 395 to 417 (FACD…TKIH). Residues 408 to 470 (DERKRHTKIH…ASCTSRTRTP (63 aa)) are disordered. Residues 412-422 (RHTKIHLRQKE) are compositionally biased toward basic residues. A compositionally biased stretch (low complexity) spans 426-439 (SAPSSSASAQSSAS). The span at 440-450 (GPGGSQAGGSL) shows a compositional bias: gly residues.

It belongs to the EGR C2H2-type zinc-finger protein family. As to quaternary structure, interacts with HCFC1. Interacts with WWP2. Interacts with UBC9. Interacts with CITED1. Interacts (via phosphorylated form) with SFN. In terms of processing, ubiquitinated by WWP2 leading to proteasomal degradation. Acetylated at Lys-247. May be deacetylated by HDAC6, HDAC10 or SIRT1.

The protein resides in the nucleus. It functions in the pathway protein modification; protein sumoylation. Functionally, sequence-specific DNA-binding transcription factor. Plays a role in hindbrain segmentation by regulating the expression of a subset of homeobox containing genes and in Schwann cell myelination by regulating the expression of genes involved in the formation and maintenance of myelin. Binds to two EGR2-consensus sites EGR2A (5'-CTGTAGGAG-3') and EGR2B (5'-ATGTAGGTG-3') in the HOXB3 enhancer and promotes HOXB3 transcriptional activation. Binds to specific DNA sites located in the promoter region of HOXA4, HOXB2 and ERBB2. Regulates hindbrain segmentation by controlling the expression of Hox genes, such as HOXA4, HOXB3 and HOXB2, and thereby specifying odd and even rhombomeres. Promotes the expression of HOXB3 in the rhombomere r5 in the hindbrain. Regulates myelination in the peripheral nervous system after birth, possibly by regulating the expression of myelin proteins, such as MPZ, and by promoting the differentiation of Schwann cells. Involved in the development of the jaw openener musculature, probably by playing a role in its innervation through trigeminal motor neurons. May play a role in adipogenesis, possibly by regulating the expression of CEBPB. E3 SUMO-protein ligase helping SUMO1 conjugation to its coregulators NAB1 and NAB2, whose sumoylation down-regulates EGR2 transcriptional activity. This is E3 SUMO-protein ligase EGR2 (Egr2) from Rattus norvegicus (Rat).